An 81-amino-acid polypeptide reads, in one-letter code: Photosystem I iron-sulfur center (81 aa).

2 4Fe-4S ferredoxin-type domains span residues 2-31 (SHIV…MVPW) and 39-68 (MASA…VRVY). Cys-11, Cys-14, Cys-17, Cys-21, Cys-48, Cys-51, Cys-54, and Cys-58 together coordinate [4Fe-4S] cluster.

The eukaryotic PSI reaction center is composed of at least 11 subunits. Requires [4Fe-4S] cluster as cofactor.

It localises to the plastid. It is found in the chloroplast thylakoid membrane. It catalyses the reaction reduced [plastocyanin] + hnu + oxidized [2Fe-2S]-[ferredoxin] = oxidized [plastocyanin] + reduced [2Fe-2S]-[ferredoxin]. Functionally, apoprotein for the two 4Fe-4S centers FA and FB of photosystem I (PSI); essential for photochemical activity. FB is the terminal electron acceptor of PSI, donating electrons to ferredoxin. The C-terminus interacts with PsaA/B/D and helps assemble the protein into the PSI complex. Required for binding of PsaD and PsaE to PSI. PSI is a plastocyanin/cytochrome c6-ferredoxin oxidoreductase, converting photonic excitation into a charge separation, which transfers an electron from the donor P700 chlorophyll pair to the spectroscopically characterized acceptors A0, A1, FX, FA and FB in turn. This is Photosystem I iron-sulfur center from Stigeoclonium helveticum (Green alga).